The primary structure comprises 343 residues: S-adenosylmethionine:tRNA ribosyltransferase-isomerase (343 aa).

Belongs to the QueA family. As to quaternary structure, monomer.

It is found in the cytoplasm. The enzyme catalyses 7-aminomethyl-7-carbaguanosine(34) in tRNA + S-adenosyl-L-methionine = epoxyqueuosine(34) in tRNA + adenine + L-methionine + 2 H(+). It participates in tRNA modification; tRNA-queuosine biosynthesis. Transfers and isomerizes the ribose moiety from AdoMet to the 7-aminomethyl group of 7-deazaguanine (preQ1-tRNA) to give epoxyqueuosine (oQ-tRNA). The sequence is that of S-adenosylmethionine:tRNA ribosyltransferase-isomerase from Borreliella burgdorferi (strain ATCC 35210 / DSM 4680 / CIP 102532 / B31) (Borrelia burgdorferi).